Here is a 386-residue protein sequence, read N- to C-terminus: mRNA-capping enzyme subunit beta (386 aa).

The tract at residues 1-137 (MDIGKMINDD…TTTITGCPPS (137 aa)) is disordered. Polar residues-rich tracts occupy residues 20–32 (VKSL…TGLP) and 41–56 (KASS…TNEM). The segment covering 57-67 (ESGEDDDDEDA) has biased composition (acidic residues). Basic and acidic residues predominate over residues 93 to 115 (RHAERDHRPPPHRQDRRDPRMER).

The protein belongs to the fungal TPase family. In terms of assembly, heterodimer. The mRNA-capping enzyme is composed of two separate chains alpha and beta, respectively a mRNA guanylyltransferase and an mRNA 5'-triphosphate monophosphatase. The cofactor is Mg(2+).

Its subcellular location is the nucleus. It catalyses the reaction a 5'-end triphospho-ribonucleoside in mRNA + H2O = a 5'-end diphospho-ribonucleoside in mRNA + phosphate + H(+). Its function is as follows. First step of mRNA capping. Converts the 5'-triphosphate end of a nascent mRNA chain into a diphosphate end. The sequence is that of mRNA-capping enzyme subunit beta (CET1) from Yarrowia lipolytica (strain CLIB 122 / E 150) (Yeast).